Consider the following 370-residue polypeptide: Probable endopolygalacturonase A (370 aa).

Positions 1–19 (MPSAKPLFCLATLAGAALA) are cleaved as a signal peptide. Residues 20-32 (APAPSRVSDFTKR) constitute a propeptide that is removed on maturation. C35 and C50 are joined by a disulfide. PbH1 repeat units lie at residues 162–192 (SDNLVIEDVTIDNSDGDSEGGHNTDGFDISE), 193–214 (STYITITGATVKNQDDCVAINS), 215–235 (GENIYFSGGTCSGGHGLSIGS), 244–265 (VKNVTFIDSTVSDSENGVRIKT), 273–295 (VEDITYSNIQLSGISDYGIVIEQ), and 307–352 (SNGV…DITG). The active-site Proton donor is D207. C209 and C225 are joined by a disulfide. The active site involves H229. An N-linked (GlcNAc...) asparagine glycan is attached at N246. 2 cysteine pairs are disulfide-bonded: C335–C340 and C359–C368.

This sequence belongs to the glycosyl hydrolase 28 family.

The protein localises to the secreted. The enzyme catalyses (1,4-alpha-D-galacturonosyl)n+m + H2O = (1,4-alpha-D-galacturonosyl)n + (1,4-alpha-D-galacturonosyl)m.. Functionally, involved in maceration and soft-rotting of plant tissue. Hydrolyzes the 1,4-alpha glycosidic bonds of de-esterified pectate in the smooth region of the plant cell wall. The sequence is that of Probable endopolygalacturonase A (pgaA) from Aspergillus niger (strain ATCC MYA-4892 / CBS 513.88 / FGSC A1513).